We begin with the raw amino-acid sequence, 344 residues long: L-threonine 3-dehydrogenase (344 aa).

Cysteine 38 provides a ligand contact to Zn(2+). Catalysis depends on charge relay system residues threonine 40 and histidine 43. The Zn(2+) site is built by histidine 63, glutamate 64, cysteine 93, cysteine 96, cysteine 99, and cysteine 107. Residues isoleucine 175, aspartate 195, arginine 200, 263-265, and 287-288 contribute to the NAD(+) site; these read LGI and IY.

This sequence belongs to the zinc-containing alcohol dehydrogenase family. In terms of assembly, homotetramer. It depends on Zn(2+) as a cofactor.

It is found in the cytoplasm. The catalysed reaction is L-threonine + NAD(+) = (2S)-2-amino-3-oxobutanoate + NADH + H(+). The protein operates within amino-acid degradation; L-threonine degradation via oxydo-reductase pathway; glycine from L-threonine: step 1/2. Catalyzes the NAD(+)-dependent oxidation of L-threonine to 2-amino-3-ketobutyrate. This is L-threonine 3-dehydrogenase from Deinococcus deserti (strain DSM 17065 / CIP 109153 / LMG 22923 / VCD115).